Reading from the N-terminus, the 95-residue chain is Nodulin (95 aa).

The sequence is that of Nodulin from Striga hermonthica (Purple witchweed).